We begin with the raw amino-acid sequence, 306 residues long: uncharacterized protein (306 aa).

This is an uncharacterized protein from Treponema pallidum (strain Nichols).